A 185-amino-acid polypeptide reads, in one-letter code: MKSFFLVVNILALTLPFLGAEVQNQEQPTCHKNDERFFDLKTVKYIPIYYVLNSSPRYEPIYYQHRLALLINNQHMPYQYYARPAAVRPHVQIPQWQVLPNIYPSTVVRHPCPHPSFIAIPPKKLQEITVIPKINTIATVEPTPIPTPEPTVNNAVIPDASSEFIIASTPETTTVPVTSPVVQKL.

Positions 1 to 20 (MKSFFLVVNILALTLPFLGA) are cleaved as a signal peptide. O-linked (GalNAc...) threonine glycosylation is present at threonine 143. The residue at position 161 (serine 161) is a Phosphoserine; alternate. The O-linked (GalNAc...) serine; alternate glycan is linked to serine 161. The O-linked (GalNAc...) threonine glycan is linked to threonine 178. Serine 179 is subject to Phosphoserine.

It belongs to the kappa-casein family. Mammary gland specific. Secreted in milk.

It localises to the secreted. Functionally, kappa-casein stabilizes micelle formation, preventing casein precipitation in milk. The sequence is that of Kappa-casein (CSN3) from Equus caballus (Horse).